Reading from the N-terminus, the 161-residue chain is Endoribonuclease YbeY (161 aa).

Zn(2+) contacts are provided by H121, H125, and H131.

It belongs to the endoribonuclease YbeY family. The cofactor is Zn(2+).

The protein localises to the cytoplasm. In terms of biological role, single strand-specific metallo-endoribonuclease involved in late-stage 70S ribosome quality control and in maturation of the 3' terminus of the 16S rRNA. This chain is Endoribonuclease YbeY, found in Xylella fastidiosa (strain M23).